The chain runs to 468 residues: Dimethylamine methyltransferase MtbB2 (468 aa).

Residue Pyl356 is a non-standard amino acid, pyrrolysine.

It belongs to the dimethylamine methyltransferase family.

The enzyme catalyses Co(I)-[dimethylamine-specific corrinoid protein] + dimethylamine + H(+) = methyl-Co(III)-[dimethylamine-specific corrinoid protein] + methylamine. The protein operates within one-carbon metabolism; methanogenesis from dimethylamine. Functionally, catalyzes the transfer of a methyl group from dimethylamine to the corrinoid cofactor of MtbC. This chain is Dimethylamine methyltransferase MtbB2 (mtbB2), found in Methanosarcina acetivorans (strain ATCC 35395 / DSM 2834 / JCM 12185 / C2A).